Reading from the N-terminus, the 28-residue chain is Ranatuerin-2SEc (28 aa).

A disulfide bridge links Cys-23 with Cys-28.

As to expression, expressed by the skin glands.

It is found in the secreted. Functionally, mast cell degranulating peptide. Causes histamine release from rat peritoneal mast cells in vitro. Has antibacterial activity against the Gram-negative bacterium E.coli K12 and Gram-positive bacterium M.luteus NCT C2665. In Lithobates sevosus (Dusky gopher frog), this protein is Ranatuerin-2SEc.